The primary structure comprises 50 residues: Insulin (50 aa).

3 disulfides stabilise this stretch: C7-C36, C19-C49, and C35-C40.

The protein belongs to the insulin family. In terms of assembly, heterodimer of a B chain and an A chain linked by two disulfide bonds.

The protein localises to the secreted. Insulin decreases blood glucose concentration. It increases cell permeability to monosaccharides, amino acids and fatty acids. It accelerates glycolysis, the pentose phosphate cycle, and glycogen synthesis in liver. The sequence is that of Insulin (INS) from Proechimys guairae (Guaira spiny rat).